The chain runs to 212 residues: Adenylate kinase (212 aa).

10-15 contributes to the ATP binding site; the sequence is GAGKGT. Positions 30-59 are NMP; that stretch reads STGDMFRAAMANQTEMGTLAKSFIDKGELV. AMP contacts are provided by residues Thr31, Arg36, 57 to 59, 86 to 89, and Gln93; these read ELV and GYPR. An LID region spans residues 127–159; it reads GRIINRKTGETYHKVFNPPADYNEDDYYQREDD. Residues Arg128 and 137–138 each bind ATP; that span reads TY. AMP contacts are provided by Arg156 and Arg167. Gln195 provides a ligand contact to ATP.

Belongs to the adenylate kinase family. Monomer.

The protein resides in the cytoplasm. It carries out the reaction AMP + ATP = 2 ADP. Its pathway is purine metabolism; AMP biosynthesis via salvage pathway; AMP from ADP: step 1/1. Functionally, catalyzes the reversible transfer of the terminal phosphate group between ATP and AMP. Plays an important role in cellular energy homeostasis and in adenine nucleotide metabolism. This is Adenylate kinase from Streptococcus mutans serotype c (strain ATCC 700610 / UA159).